Reading from the N-terminus, the 239-residue chain is Ribosome assembly factor mrt4 (239 aa).

Belongs to the universal ribosomal protein uL10 family. As to quaternary structure, associates with the pre-60S ribosomal particle.

It is found in the nucleus. Its subcellular location is the nucleolus. It localises to the cytoplasm. Functionally, component of the ribosome assembly machinery. Nuclear paralog of the ribosomal protein P0, it binds pre-60S subunits at an early stage of assembly in the nucleolus, and is replaced by P0 in cytoplasmic pre-60S subunits and mature 80S ribosomes. In Candida glabrata (strain ATCC 2001 / BCRC 20586 / JCM 3761 / NBRC 0622 / NRRL Y-65 / CBS 138) (Yeast), this protein is Ribosome assembly factor mrt4.